A 156-amino-acid chain; its full sequence is Small ribosomal subunit protein uS7 (156 aa).

The protein belongs to the universal ribosomal protein uS7 family. As to quaternary structure, part of the 30S ribosomal subunit. Contacts proteins S9 and S11.

Functionally, one of the primary rRNA binding proteins, it binds directly to 16S rRNA where it nucleates assembly of the head domain of the 30S subunit. Is located at the subunit interface close to the decoding center, probably blocks exit of the E-site tRNA. The polypeptide is Small ribosomal subunit protein uS7 (Anaeromyxobacter sp. (strain Fw109-5)).